Reading from the N-terminus, the 95-residue chain is Citrate lyase acyl carrier protein (95 aa).

The residue at position 14 (Ser-14) is an O-(phosphoribosyl dephospho-coenzyme A)serine.

The protein belongs to the CitD family. In terms of assembly, oligomer with a subunit composition of (alpha,beta,gamma)6.

It localises to the cytoplasm. Functionally, covalent carrier of the coenzyme of citrate lyase. The polypeptide is Citrate lyase acyl carrier protein (Haemophilus ducreyi (strain 35000HP / ATCC 700724)).